The primary structure comprises 179 residues: Nucleoside diphosphate kinase 6 (179 aa).

6 residues coordinate ATP: K18, F67, R95, T101, R115, and N125. Residue H128 is the Pros-phosphohistidine intermediate of the active site.

It belongs to the NDK family. The cofactor is Mg(2+).

It catalyses the reaction a 2'-deoxyribonucleoside 5'-diphosphate + ATP = a 2'-deoxyribonucleoside 5'-triphosphate + ADP. It carries out the reaction a ribonucleoside 5'-diphosphate + ATP = a ribonucleoside 5'-triphosphate + ADP. Its function is as follows. Major role in the synthesis of nucleoside triphosphates other than ATP. The ATP gamma phosphate is transferred to the NDP beta phosphate via a ping-pong mechanism, using a phosphorylated active-site intermediate. The chain is Nucleoside diphosphate kinase 6 (nme6) from Xenopus tropicalis (Western clawed frog).